A 215-amino-acid polypeptide reads, in one-letter code: Urease accessory protein UreG (215 aa).

The interval 1–21 (MNAPAPSSARRTKKLPPLRVG) is disordered. 24–31 (GPVGSGKT) serves as a coordination point for GTP.

It belongs to the SIMIBI class G3E GTPase family. UreG subfamily. As to quaternary structure, homodimer. UreD, UreF and UreG form a complex that acts as a GTP-hydrolysis-dependent molecular chaperone, activating the urease apoprotein by helping to assemble the nickel containing metallocenter of UreC. The UreE protein probably delivers the nickel.

The protein localises to the cytoplasm. Its function is as follows. Facilitates the functional incorporation of the urease nickel metallocenter. This process requires GTP hydrolysis, probably effectuated by UreG. The polypeptide is Urease accessory protein UreG (Burkholderia lata (strain ATCC 17760 / DSM 23089 / LMG 22485 / NCIMB 9086 / R18194 / 383)).